The chain runs to 497 residues: Lysophospholipid acyltransferase 5 (497 aa).

6 helical membrane-spanning segments follow: residues 31 to 51 (LLTILAGYPVAALYQKFISVI), 74 to 94 (GLDTYHSLIAILTTYFLVLLL), 100 to 120 (IFLAINFVFHMSYLLLGYFYT), 173 to 193 (LELLAFSYFPSGFLVGPQFPF), 213 to 235 (AGVRRFGAGAFYLIVCQVGLRYL), and 264 to 286 (SLYKYISCWLLTEGALICIGLTY). Residues asparagine 322 and histidine 358 contribute to the active site. The chain crosses the membrane as a helical span at residues 339–361 (FLNNRTISYGAALGFLAVWHGYH). An N-linked (GlcNAc...) asparagine glycan is attached at asparagine 398. 2 helical membrane passes run 408–428 (FITLKSYNVVYMGWCLTAFVF) and 435–455 (IVVYGAVSYYGFTFLVLWAAF). The segment at 469-497 (KLAGEDQKLQDSNTDKLVEEKKPEDKKSE) is disordered. The span at 470–497 (LAGEDQKLQDSNTDKLVEEKKPEDKKSE) shows a compositional bias: basic and acidic residues. Serine 480 is modified (phosphoserine).

Belongs to the membrane-bound acyltransferase family. During gastrulation, expressed mainly along the midline in the presumptive mesoderm. During germ band elongation, expressed in mesoderm and endoderm primordia and in the cephalic furrow. Expression in mesoderm and endoderm lineages continues during germ band shortening. At the end of this process, no longer detected in somatic mesoderm or endoderm layer with expression restricted to anterior and posterior domains of the visceral mesoderm.

Its subcellular location is the endoplasmic reticulum. It localises to the membrane. The enzyme catalyses a 1-acyl-sn-glycero-3-phospho-L-serine + an acyl-CoA = a 1,2-diacyl-sn-glycero-3-phospho-L-serine + CoA. It carries out the reaction 1-(9Z-octadecenoyl)-sn-glycero-3-phospho-L-serine + (9Z)-hexadecenoyl-CoA = 1-(9Z-octadecenoyl)-2-(9Z-hexadecenoyl)-sn-glycero-3-phospho-L-serine + CoA. It catalyses the reaction a 1-acyl-sn-glycero-3-phosphocholine + an acyl-CoA = a 1,2-diacyl-sn-glycero-3-phosphocholine + CoA. The catalysed reaction is 1-hexadecanoyl-sn-glycero-3-phosphocholine + (9Z)-octadecenoyl-CoA = 1-hexadecanoyl-2-(9Z-octadecenoyl)-sn-glycero-3-phosphocholine + CoA. The enzyme catalyses (9Z,12Z)-octadecadienoyl-CoA + 1-hexadecanoyl-sn-glycero-3-phosphocholine = 1-hexadecanoyl-2-(9Z,12Z-octadecadienoyl)-sn-glycero-3-phosphocholine + CoA. It carries out the reaction (5Z,8Z,11Z,14Z)-eicosatetraenoyl-CoA + 1-hexadecanoyl-sn-glycero-3-phosphocholine = 1-hexadecanoyl-2-(5Z,8Z,11Z,14Z-eicosatetraenoyl)-sn-glycero-3-phosphocholine + CoA. It catalyses the reaction (9Z)-hexadecenoyl-CoA + 1-hexadecanoyl-sn-glycero-3-phosphocholine = 1-hexadecanoyl-2-(9Z-hexadecenoyl)-sn-glycero-3-phosphocholine + CoA. It functions in the pathway lipid metabolism; phospholipid metabolism. In terms of biological role, acyltransferase that mediates the acylation of lysophospholipids to produce phospholipids (glycerophospholipids). Highest activity with lysophosphatidylcholine (1-acyl-sn-glycero-3-phosphocholine or LPC) producing phosphatidylcholine (1,2-diacyl-sn-glycero-3-phosphocholine or PC) (LPCAT activity), but also converts lysophosphatidylserine (1-acyl-2-hydroxy-sn-glycero-3-phospho-L-serine or LPS) to phosphatidylserine (1,2-diacyl-sn-glycero-3-phospho-L-serine or PS) (LPSAT activity). Has a preference for unsaturated fatty acids of at least 16 carbons such as oleoyl-CoA ((9Z)-octadecenoyl-CoA) and palmitoleoyl-CoA ((9Z)-hexadecenoyl-CoA). Glycerophospholipids are important structural and functional components of cellular membrane, acyl-chain remodeling regulates the molecular species distribution of glycerophospholipids which can affect membrane fluidity and curvature. Essential for fertility and viability together with Oysgedart (Oys). Required for germ cells to migrate into the mesoderm. The protein is Lysophospholipid acyltransferase 5 of Drosophila melanogaster (Fruit fly).